A 350-amino-acid chain; its full sequence is Flap endonuclease 1 (350 aa).

The segment at 1 to 101 (MGVNLRELIP…REVEERLRRK (101 aa)) is N-domain. Residues Asp-30, Asp-83, Glu-155, Glu-157, Asp-176, Asp-178, and Asp-239 each contribute to the Mg(2+) site. Positions 119–261 (EARKYAMMAA…TALRLVKSLG (143 aa)) are I-domain. Positions 341–349 (RQSRLDMWF) are interaction with PCNA.

It belongs to the XPG/RAD2 endonuclease family. FEN1 subfamily. As to quaternary structure, interacts with PCNA. PCNA stimulates the nuclease activity without altering cleavage specificity. Mg(2+) serves as cofactor.

Functionally, structure-specific nuclease with 5'-flap endonuclease and 5'-3' exonuclease activities involved in DNA replication and repair. During DNA replication, cleaves the 5'-overhanging flap structure that is generated by displacement synthesis when DNA polymerase encounters the 5'-end of a downstream Okazaki fragment. Binds the unpaired 3'-DNA end and kinks the DNA to facilitate 5' cleavage specificity. Cleaves one nucleotide into the double-stranded DNA from the junction in flap DNA, leaving a nick for ligation. Also involved in the base excision repair (BER) pathway. Acts as a genome stabilization factor that prevents flaps from equilibrating into structures that lead to duplications and deletions. Also possesses 5'-3' exonuclease activity on nicked or gapped double-stranded DNA. The sequence is that of Flap endonuclease 1 from Aeropyrum pernix (strain ATCC 700893 / DSM 11879 / JCM 9820 / NBRC 100138 / K1).